The chain runs to 408 residues: Protein ZNF365 (408 aa).

Position 16 is a phosphoserine (S16). A C2H2-type; degenerate zinc finger spans residues 26–51; sequence FRCPRCGDHTRFRSLSSLRAHLEFSH. S139 and S146 each carry phosphoserine. A coiled-coil region spans residues 170 to 298; the sequence is VEAVDRTIEK…QLEYYQSQQA (129 aa). Position 176 is a phosphothreonine (T176). A Phosphoserine modification is found at S370.

As to quaternary structure, homodimers. Interacts with NDE1 and NDEL1. Interacts with DISC1. Interacts with PARP1. Interacts with MCRS1. In terms of tissue distribution, expressed in cerebral cortex, hippocampus, olfactory tubercle and striatum.

The protein localises to the cytoplasm. It localises to the cytoskeleton. It is found in the microtubule organizing center. Its subcellular location is the centrosome. Involved in the positive regulation of oligodendrocyte differentiation during postnatal growth. Involved in the morphogenesis of basket cells in the somatosensory cortex during embryogenesis. Involved in dendritic arborization, morphogenesis of spine density dendrite, and establishment of postsynaptic dendrite density in cortical pyramidal neurons. Involved in the regulation of neurogenesis. Negatively regulates neurite outgrowth. Involved in homologous recombination (HR) repair pathway. Required for proper resolution of DNA double-strand breaks (DSBs) by HR. Is required for recovery of stalled replication forks, and directly contributes to genomic stability. Interacts with PARP1 and mediates MRE11-dependent DNA end resection during replication fork recovery. Contributes to genomic stability by preventing telomere dysfunction. This chain is Protein ZNF365 (Znf365), found in Rattus norvegicus (Rat).